The sequence spans 110 residues: Heat shock protein Hsp-12.2 (110 aa).

Residues 15 to 110 form the sHSP domain; sequence DWPLQHNDGV…VLTITASKKA (96 aa).

This sequence belongs to the small heat shock protein (HSP20) family.

The sequence is that of Heat shock protein Hsp-12.2 (hsp-12.2) from Caenorhabditis elegans.